Here is a 312-residue protein sequence, read N- to C-terminus: Dehydrin CAS31 (312 aa).

2 disordered regions span residues 1–88 (MSQY…HTGG) and 248–287 (GTEQ…HHGE). Residues 21–30 (PLTSQGQVDQ) are compositionally biased toward polar residues. A compositionally biased stretch (gly residues) spans 35 to 46 (ISGGGMTGATGH). Positions 55–66 (HGVGVDQTTGFG) are enriched in low complexity. Composition is skewed to gly residues over residues 67–88 (SNTG…HTGG) and 256–278 (TGTG…GTTG).

It belongs to the plant dehydrin family. As to quaternary structure, interacts with the leghemoglobin LB120-1 in the cytoplasm; this interaction leads to LB120-1 protection from denaturation under thermal and drought stresses. Expressed in nodules and roots.

The protein resides in the cytoplasm. Functionally, intrinsically disordered protein acting as a chaperone. Ensures leghemoglobins (e.g. LB120-1) protection from denaturation under thermal and drought stresses to delay root nodule nitrogenase inactivation and subsequent nodule senescence, thus supporting symbiotic nitrogen fixation (SNF). This is Dehydrin CAS31 from Medicago truncatula (Barrel medic).